Here is a 288-residue protein sequence, read N- to C-terminus: 5,10-methylenetetrahydrofolate reductase (288 aa).

FAD-binding residues include Ala-51, His-73, Gly-106, Asp-107, Ala-118, Tyr-140, His-144, and Lys-159. Asp-107 provides a ligand contact to (6S)-5-methyl-5,6,7,8-tetrahydrofolate. Gln-175 is a binding site for (6S)-5-methyl-5,6,7,8-tetrahydrofolate. Residue Gln-175 coordinates NADH.

Belongs to the methylenetetrahydrofolate reductase family. It depends on FAD as a cofactor.

It catalyses the reaction (6S)-5-methyl-5,6,7,8-tetrahydrofolate + NAD(+) = (6R)-5,10-methylene-5,6,7,8-tetrahydrofolate + NADH + H(+). It functions in the pathway one-carbon metabolism; tetrahydrofolate interconversion. Its pathway is amino-acid biosynthesis; L-methionine biosynthesis via de novo pathway. In terms of biological role, catalyzes the NADH-dependent reduction of 5,10-methylenetetrahydrofolate to 5-methyltetrahydrofolate. Is required to provide the methyl group necessary for methionine synthetase to convert homocysteine to methionine; the methyl group is given by 5-methyltetrahydrofolate. Is required for Sphingobium SYK-6 to grow on vanillate or syringate as the sole source of carbon. The protein is 5,10-methylenetetrahydrofolate reductase of Sphingobium sp. (strain NBRC 103272 / SYK-6).